The sequence spans 388 residues: Chalcone synthase (388 aa).

The active site involves C164.

It belongs to the thiolase-like superfamily. Chalcone/stilbene synthases family.

The enzyme catalyses (E)-4-coumaroyl-CoA + 3 malonyl-CoA + 3 H(+) = 2',4,4',6'-tetrahydroxychalcone + 3 CO2 + 4 CoA. It participates in secondary metabolite biosynthesis; flavonoid biosynthesis. Its function is as follows. The primary product of this enzyme is 4,2',4',6'-tetrahydroxychalcone (also termed naringenin-chalcone or chalcone) which can under specific conditions spontaneously isomerize into naringenin. The sequence is that of Chalcone synthase (CHS) from Vigna unguiculata (Cowpea).